The chain runs to 556 residues: Formate--tetrahydrofolate ligase (556 aa).

65-72 (TPAGEGKS) serves as a coordination point for ATP.

This sequence belongs to the formate--tetrahydrofolate ligase family.

It catalyses the reaction (6S)-5,6,7,8-tetrahydrofolate + formate + ATP = (6R)-10-formyltetrahydrofolate + ADP + phosphate. It functions in the pathway one-carbon metabolism; tetrahydrofolate interconversion. The protein is Formate--tetrahydrofolate ligase of Clostridium perfringens (strain ATCC 13124 / DSM 756 / JCM 1290 / NCIMB 6125 / NCTC 8237 / Type A).